Consider the following 351-residue polypeptide: Nicotinate-nucleotide--dimethylbenzimidazole phosphoribosyltransferase (351 aa).

Glutamate 317 (proton acceptor) is an active-site residue.

This sequence belongs to the CobT family.

The catalysed reaction is 5,6-dimethylbenzimidazole + nicotinate beta-D-ribonucleotide = alpha-ribazole 5'-phosphate + nicotinate + H(+). Its pathway is nucleoside biosynthesis; alpha-ribazole biosynthesis; alpha-ribazole from 5,6-dimethylbenzimidazole: step 1/2. Catalyzes the synthesis of alpha-ribazole-5'-phosphate from nicotinate mononucleotide (NAMN) and 5,6-dimethylbenzimidazole (DMB). The sequence is that of Nicotinate-nucleotide--dimethylbenzimidazole phosphoribosyltransferase from Pseudomonas fluorescens (strain ATCC BAA-477 / NRRL B-23932 / Pf-5).